The following is a 221-amino-acid chain: Adenylate kinase (221 aa).

10–15 (GAGKGT) provides a ligand contact to ATP. Positions 30–59 (STGDMLRAAVKAGTPLGIEAKKVMDAGGLV) are NMP. AMP contacts are provided by residues T31, R36, 57-59 (GLV), 85-88 (GFPR), and Q92. An LID region spans residues 122–159 (GRRVHVASGRTYHVKFNPPKADMVDDETGEALIQRDDD). ATP is bound by residues R123 and 132–133 (TY). AMP is bound by residues R156 and R167. ATP is bound at residue G207.

It belongs to the adenylate kinase family. Monomer.

Its subcellular location is the cytoplasm. The enzyme catalyses AMP + ATP = 2 ADP. It participates in purine metabolism; AMP biosynthesis via salvage pathway; AMP from ADP: step 1/1. Catalyzes the reversible transfer of the terminal phosphate group between ATP and AMP. Plays an important role in cellular energy homeostasis and in adenine nucleotide metabolism. The polypeptide is Adenylate kinase (Cupriavidus metallidurans (strain ATCC 43123 / DSM 2839 / NBRC 102507 / CH34) (Ralstonia metallidurans)).